A 286-amino-acid chain; its full sequence is 3-methyl-2-oxobutanoate hydroxymethyltransferase (286 aa).

Mg(2+) contacts are provided by aspartate 67 and aspartate 106. Residues 67 to 68 (DS), aspartate 106, and lysine 136 contribute to the 3-methyl-2-oxobutanoate site. Residue glutamate 138 coordinates Mg(2+). Glutamate 204 functions as the Proton acceptor in the catalytic mechanism.

This sequence belongs to the PanB family. In terms of assembly, homodecamer; pentamer of dimers. Mg(2+) is required as a cofactor.

The protein resides in the cytoplasm. The catalysed reaction is 3-methyl-2-oxobutanoate + (6R)-5,10-methylene-5,6,7,8-tetrahydrofolate + H2O = 2-dehydropantoate + (6S)-5,6,7,8-tetrahydrofolate. The protein operates within cofactor biosynthesis; (R)-pantothenate biosynthesis; (R)-pantoate from 3-methyl-2-oxobutanoate: step 1/2. In terms of biological role, catalyzes the reversible reaction in which hydroxymethyl group from 5,10-methylenetetrahydrofolate is transferred onto alpha-ketoisovalerate to form ketopantoate. In Mycobacterium leprae (strain TN), this protein is 3-methyl-2-oxobutanoate hydroxymethyltransferase.